The primary structure comprises 221 residues: Catechol O-methyltransferase (221 aa).

Valine 41, glycine 65, leucine 67, serine 71, glutamate 89, histidine 94, alanine 118, and aspartate 139 together coordinate S-adenosyl-L-methionine. Positions 139, 165, and 166 each coordinate Mg(2+).

This sequence belongs to the class I-like SAM-binding methyltransferase superfamily. Cation-dependent O-methyltransferase family. In terms of assembly, homodimer. It depends on Mg(2+) as a cofactor.

It catalyses the reaction a catechol + S-adenosyl-L-methionine = a guaiacol + S-adenosyl-L-homocysteine + H(+). With respect to regulation, the metal ion affects the meta and para-regiospecificity of the enzyme as well as the enzyme activity and thermal stability. Functionally, catechol O-methyltransferase that can use various catechol-like compounds. Can produce vanillic acid (meta-form) and iso-vanillic acid (para-form) from protocatechuic acid (PCA). Does not have a regiospecificity, and produces the meta- and para-forms of the products in equal proportion. The protein is Catechol O-methyltransferase of Niastella koreensis (strain DSM 17620 / KACC 11465 / NBRC 106392 / GR20-10).